The chain runs to 396 residues: S-adenosylmethionine synthase (396 aa).

His-15 provides a ligand contact to ATP. A Mg(2+)-binding site is contributed by Asp-17. Glu-43 contributes to the K(+) binding site. L-methionine is bound by residues Glu-56 and Gln-99. A flexible loop region spans residues Gln-99 to Lys-109. Residues Asp-175–Lys-177, Arg-241–Phe-242, Asp-250, Arg-256–Lys-257, Ala-273, and Lys-277 contribute to the ATP site. Asp-250 is an L-methionine binding site. Lys-281 serves as a coordination point for L-methionine.

The protein belongs to the AdoMet synthase family. In terms of assembly, homotetramer; dimer of dimers. It depends on Mg(2+) as a cofactor. The cofactor is K(+).

It localises to the cytoplasm. It catalyses the reaction L-methionine + ATP + H2O = S-adenosyl-L-methionine + phosphate + diphosphate. It participates in amino-acid biosynthesis; S-adenosyl-L-methionine biosynthesis; S-adenosyl-L-methionine from L-methionine: step 1/1. Functionally, catalyzes the formation of S-adenosylmethionine (AdoMet) from methionine and ATP. The overall synthetic reaction is composed of two sequential steps, AdoMet formation and the subsequent tripolyphosphate hydrolysis which occurs prior to release of AdoMet from the enzyme. The protein is S-adenosylmethionine synthase of Ruminiclostridium cellulolyticum (strain ATCC 35319 / DSM 5812 / JCM 6584 / H10) (Clostridium cellulolyticum).